The chain runs to 158 residues: Transcription elongation factor GreA (158 aa).

Residues 53–73 (EQQGFIEGRIKEIEAKLSNAQ) adopt a coiled-coil conformation.

The protein belongs to the GreA/GreB family.

In terms of biological role, necessary for efficient RNA polymerase transcription elongation past template-encoded arresting sites. The arresting sites in DNA have the property of trapping a certain fraction of elongating RNA polymerases that pass through, resulting in locked ternary complexes. Cleavage of the nascent transcript by cleavage factors such as GreA or GreB allows the resumption of elongation from the new 3'terminus. GreA releases sequences of 2 to 3 nucleotides. In Thioalkalivibrio sulfidiphilus (strain HL-EbGR7), this protein is Transcription elongation factor GreA.